The sequence spans 520 residues: Probable cytochrome P450 4p2 (520 aa).

The heme site is built by Glu325 and Cys464.

The protein belongs to the cytochrome P450 family. Heme serves as cofactor.

Its subcellular location is the endoplasmic reticulum membrane. It localises to the microsome membrane. Its function is as follows. May be involved in the metabolism of insect hormones and in the breakdown of synthetic insecticides. The chain is Probable cytochrome P450 4p2 (Cyp4p2) from Drosophila melanogaster (Fruit fly).